The chain runs to 753 residues: Neuroendocrine convertase 1 (753 aa).

A signal peptide spans 1–27; it reads MGRRAWTLQCTAFSLFCAWCAMNSVKA. The propeptide occupies 28-110; that stretch reads KKQFVNEWAA…QQYEKERSKR (83 aa). Positions 129–450 constitute a Peptidase S8 domain; sequence QWYLQDTRMT…FGLLNAKALV (322 aa). Catalysis depends on Asp167, which acts as the Charge relay system. Residue Asn173 is glycosylated (N-linked (GlcNAc...) asparagine). The active-site Charge relay system is the His208. Disulfide bonds link Cys225–Cys374 and Cys317–Cys347. Ser382 acts as the Charge relay system in catalysis. N-linked (GlcNAc...) asparagine glycosylation is present at Asn401. The 138-residue stretch at 460 to 597 folds into the P/Homo B domain; sequence SVPEKKECVV…KLILHGTSSQ (138 aa). Cys467 and Cys494 form a disulfide bridge. Disordered regions lie at residues 617-657 and 676-695; these read RRGV…RRDE and SKNS…KPNI.

The protein belongs to the peptidase S8 family. Furin subfamily. Ca(2+) is required as a cofactor.

Its subcellular location is the cytoplasmic vesicle. The protein resides in the secretory vesicle. The catalysed reaction is Release of protein hormones, neuropeptides and renin from their precursors, generally by hydrolysis of -Lys-Arg-|- bonds.. Its function is as follows. Involved in the processing of hormone and other protein precursors at sites comprised of pairs of basic amino acid residues. Substrates include POMC, renin, enkephalin, dynorphin, somatostatin, insulin and AGRP. The sequence is that of Neuroendocrine convertase 1 (PCSK1) from Bos taurus (Bovine).